The following is a 901-amino-acid chain: HTH-type transcriptional regulator MalT (901 aa).

An ATP-binding site is contributed by Ser39–Thr46. In terms of domain architecture, HTH luxR-type spans Glu829–Leu894. Positions Asn853–Arg872 form a DNA-binding region, H-T-H motif.

The protein belongs to the MalT family. In terms of assembly, monomer in solution. Oligomerizes to an active state in the presence of the positive effectors ATP and maltotriose.

Its activity is regulated as follows. Activated by ATP and maltotriose, which are both required for DNA binding. Functionally, positively regulates the transcription of the maltose regulon whose gene products are responsible for uptake and catabolism of malto-oligosaccharides. Specifically binds to the promoter region of its target genes, recognizing a short DNA motif called the MalT box. The sequence is that of HTH-type transcriptional regulator MalT from Escherichia coli O6:H1 (strain CFT073 / ATCC 700928 / UPEC).